Consider the following 200-residue polypeptide: Integrin beta-1-binding protein 1 (200 aa).

Basic residues predominate over residues Met-1–Ser-10. The interval Met-1–Asn-56 is disordered. Residues Lys-6–Lys-7 carry the Nuclear localization signal motif. Positions Ser-11–Ser-29 are enriched in low complexity. The span at Ser-34–Asn-56 shows a compositional bias: polar residues. Thr-38 carries the post-translational modification Phosphothreonine; by CaMK2. Ser-41 is modified (phosphoserine). A PID domain is found at Asp-58–Pro-200. Residues Tyr-136–Ile-139 are interaction with KRIT1. The segment at Ile-139 to Met-141 is interaction with ITGB1.

In terms of assembly, interacts (via N-terminus and PTB domain) with ROCK1. Found in a complex, at least composed of ITGB1BP1, KRIT1 and RAP1A. Interacts (via C-terminal region) with ITGB1 (via C-terminal cytoplasmic tail); the interaction prevents talin TLN1 binding to ITGB1 and KRIT1 and ITGB1 compete for the same binding site. Interacts with KRIT1 (via N-terminal NPXY motif); the interaction induces the opening conformation of KRIT1 and KRIT1 and ITGB1 compete for the same binding site. Isoform 2 does not interact with ITGB1. Interacts with CDC42 (GTP- or GDP-bound form); the interaction is increased with the CDC42-membrane bound forms and prevents both CDC42 activation and cell spreading. Interacts (via C-terminal domain region) with NME2. Interacts with FERMT2 and RAC1. In terms of processing, phosphorylation at Thr-38 seems to enhance integrin alpha5beta1-mediated cell adhesion. The degree of phosphorylation is regulated by integrin-dependent cell-matrix interaction.

The protein localises to the nucleus. It is found in the cytoplasm. It localises to the cytoskeleton. The protein resides in the cell membrane. Its subcellular location is the cell projection. The protein localises to the lamellipodium. It is found in the ruffle. Key regulator of the integrin-mediated cell-matrix interaction signaling by binding to the ITGB1 cytoplasmic tail and preventing the activation of integrin alpha-5/beta-1 (heterodimer of ITGA5 and ITGB1) by talin or FERMT1. Plays a role in cell proliferation, differentiation, spreading, adhesion and migration in the context of mineralization and bone development and angiogenesis. Stimulates cellular proliferation in a fibronectin-dependent manner. Involved in the regulation of beta-1 integrin-containing focal adhesion (FA) site dynamics by controlling its assembly rate during cell adhesion; inhibits beta-1 integrin clustering within FA by directly competing with talin TLN1, and hence stimulates osteoblast spreading and migration in a fibronectin- and/or collagen-dependent manner. Acts as a guanine nucleotide dissociation inhibitor (GDI) by regulating Rho family GTPases during integrin-mediated cell matrix adhesion; reduces the level of active GTP-bound form of both CDC42 and RAC1 GTPases upon cell adhesion to fibronectin. Stimulates the release of active CDC42 from the membranes to maintain it in an inactive cytoplasmic pool. Participates in the translocation of the Rho-associated protein kinase ROCK1 to membrane ruffles at cell leading edges of the cell membrane, leading to an increase of myoblast cell migration on laminin. Plays a role in bone mineralization at a late stage of osteoblast differentiation; modulates the dynamic formation of focal adhesions into fibrillar adhesions, which are adhesive structures responsible for fibronectin deposition and fibrillogenesis. Plays a role in blood vessel development; acts as a negative regulator of angiogenesis by attenuating endothelial cell proliferation and migration, lumen formation and sprouting angiogenesis by promoting AKT phosphorylation and inhibiting ERK1/2 phosphorylation through activation of the Notch signaling pathway. Promotes transcriptional activity of the MYC promoter. The protein is Integrin beta-1-binding protein 1 (ITGB1BP1) of Bos taurus (Bovine).